We begin with the raw amino-acid sequence, 144 residues long: 3-dehydroquinate dehydratase (144 aa).

The active-site Proton acceptor is Tyr24. Residues Asn76, His82, and Asp89 each coordinate substrate. His102 serves as the catalytic Proton donor. Residues 103-104 (LS) and Arg113 each bind substrate.

The protein belongs to the type-II 3-dehydroquinase family. Homododecamer.

It carries out the reaction 3-dehydroquinate = 3-dehydroshikimate + H2O. Its pathway is metabolic intermediate biosynthesis; chorismate biosynthesis; chorismate from D-erythrose 4-phosphate and phosphoenolpyruvate: step 3/7. Functionally, catalyzes a trans-dehydration via an enolate intermediate. In Bordetella avium (strain 197N), this protein is 3-dehydroquinate dehydratase.